Here is a 152-residue protein sequence, read N- to C-terminus: Large-conductance mechanosensitive channel (152 aa).

2 helical membrane passes run 14–34 and 84–104; these read VIDL…VKSL and VGQF…VFLL.

This sequence belongs to the MscL family. In terms of assembly, homopentamer.

It localises to the cell inner membrane. In terms of biological role, channel that opens in response to stretch forces in the membrane lipid bilayer. May participate in the regulation of osmotic pressure changes within the cell. This Laribacter hongkongensis (strain HLHK9) protein is Large-conductance mechanosensitive channel.